The chain runs to 451 residues: Phosphoglucosamine mutase (451 aa).

The active-site Phosphoserine intermediate is the serine 107. Residues serine 107, aspartate 246, aspartate 248, and aspartate 250 each coordinate Mg(2+). Serine 107 carries the post-translational modification Phosphoserine.

Belongs to the phosphohexose mutase family. Requires Mg(2+) as cofactor. In terms of processing, activated by phosphorylation.

The enzyme catalyses alpha-D-glucosamine 1-phosphate = D-glucosamine 6-phosphate. Catalyzes the conversion of glucosamine-6-phosphate to glucosamine-1-phosphate. The chain is Phosphoglucosamine mutase from Burkholderia cenocepacia (strain ATCC BAA-245 / DSM 16553 / LMG 16656 / NCTC 13227 / J2315 / CF5610) (Burkholderia cepacia (strain J2315)).